The sequence spans 552 residues: Scaffold protein (552 aa).

The protein belongs to the poxviridae protein D13 family. In terms of assembly, homotrimer. Self-assembles to form a layer. Interacts with A17 (via N-terminus); this interaction is necessary for D13 association with membranes.

It localises to the membrane. Its function is as follows. Scaffold protein which forms a transitory spherical honeycomb lattice providing curvature and rigidity to the convex membrane of crescent and immature virions (IV). This association occurs concomitantly with viral membrane formation. Targeted by the drug rifampicin, which prevents the formation of this lattice, and hence virus morphogenesis. In the presence of rifampicin, irregularly shaped membranes that lack the honeycomb layer accumulate around areas of electron-dense viroplasm. This layer is lost from virions during maturation from IV to mature virion (MV), through the proteolysis of A17 N-terminus. The polypeptide is Scaffold protein (Vertebrata (FPV)).